The primary structure comprises 506 residues: Ribose import ATP-binding protein RbsA 2 (506 aa).

ABC transporter domains follow at residues 7 to 242 and 250 to 497; these read LEMR…VGRP and ERDI…TGVN. ATP is bound at residue 39 to 46; sequence GENGAGKS.

This sequence belongs to the ABC transporter superfamily. Ribose importer (TC 3.A.1.2.1) family. As to quaternary structure, the complex is composed of an ATP-binding protein (RbsA), two transmembrane proteins (RbsC) and a solute-binding protein (RbsB).

Its subcellular location is the cell inner membrane. It carries out the reaction D-ribose(out) + ATP + H2O = D-ribose(in) + ADP + phosphate + H(+). Part of the ABC transporter complex RbsABC involved in ribose import. Responsible for energy coupling to the transport system. This chain is Ribose import ATP-binding protein RbsA 2, found in Escherichia coli O157:H7.